Here is a 334-residue protein sequence, read N- to C-terminus: Glycerol-3-phosphate dehydrogenase [NAD(P)+] (334 aa).

Serine 14, tyrosine 15, histidine 35, and lysine 109 together coordinate NADPH. The sn-glycerol 3-phosphate site is built by lysine 109, glycine 138, and threonine 140. Position 142 (alanine 142) interacts with NADPH. The sn-glycerol 3-phosphate site is built by lysine 194, aspartate 247, serine 257, arginine 258, and asparagine 259. The active-site Proton acceptor is lysine 194. Arginine 258 contributes to the NADPH binding site. 2 residues coordinate NADPH: valine 282 and glutamate 284.

This sequence belongs to the NAD-dependent glycerol-3-phosphate dehydrogenase family.

It localises to the cytoplasm. The enzyme catalyses sn-glycerol 3-phosphate + NAD(+) = dihydroxyacetone phosphate + NADH + H(+). It catalyses the reaction sn-glycerol 3-phosphate + NADP(+) = dihydroxyacetone phosphate + NADPH + H(+). It participates in membrane lipid metabolism; glycerophospholipid metabolism. Functionally, catalyzes the reduction of the glycolytic intermediate dihydroxyacetone phosphate (DHAP) to sn-glycerol 3-phosphate (G3P), the key precursor for phospholipid synthesis. The polypeptide is Glycerol-3-phosphate dehydrogenase [NAD(P)+] (Tolumonas auensis (strain DSM 9187 / NBRC 110442 / TA 4)).